A 238-amino-acid chain; its full sequence is Probable transcriptional regulatory protein SZO_02930 (238 aa).

Belongs to the TACO1 family. YeeN subfamily.

The protein resides in the cytoplasm. The chain is Probable transcriptional regulatory protein SZO_02930 from Streptococcus equi subsp. zooepidemicus (strain H70).